Here is a 217-residue protein sequence, read N- to C-terminus: Cytidylate kinase (217 aa).

9–17 (GPAGSGKTT) serves as a coordination point for ATP.

This sequence belongs to the cytidylate kinase family. Type 1 subfamily.

Its subcellular location is the cytoplasm. The enzyme catalyses CMP + ATP = CDP + ADP. It carries out the reaction dCMP + ATP = dCDP + ADP. This is Cytidylate kinase from Thermosipho melanesiensis (strain DSM 12029 / CIP 104789 / BI429).